The following is a 373-amino-acid chain: Forkhead box protein F1 (373 aa).

The interval 1-51 (MTAEIQQPPSQPPAQSSPMSAATDKHGGQPSVMESANCATKTKKTNAGIRR) is disordered. Residues 13-22 (PAQSSPMSAA) are compositionally biased toward low complexity. Residues 54–148 (KPPYSYIALI…EEGSFRRRPR (95 aa)) constitute a DNA-binding region (fork-head). 2 disordered regions span residues 236–255 (GSSGGDYSHHDSGSPLLGGG) and 283–306 (QPLSPCNSAANPLSSSLSSHSLDQ). Positions 286 to 306 (SPCNSAANPLSSSLSSHSLDQ) are enriched in low complexity.

The protein resides in the nucleus. Functionally, probable transcription factor. Required for smooth muscle (visceral mesoderm) differentiation during gut development. Also required for normal proliferation of the lateral plate mesoderm. Acts as a downstream mediator of bmp4-signaling. In Xenopus tropicalis (Western clawed frog), this protein is Forkhead box protein F1.